Here is a 171-residue protein sequence, read N- to C-terminus: Transcription antitermination protein NusB (171 aa).

The protein belongs to the NusB family.

Functionally, involved in transcription antitermination. Required for transcription of ribosomal RNA (rRNA) genes. Binds specifically to the boxA antiterminator sequence of the ribosomal RNA (rrn) operons. This Brucella abortus (strain S19) protein is Transcription antitermination protein NusB.